Reading from the N-terminus, the 76-residue chain is Conotoxin VnMEKL-012 (76 aa).

The first 18 residues, 1–18 (MKLTILFLVAAVLMSTQA), serve as a signal peptide directing secretion. Residues 19 to 42 (LIQHDGEKSQKAKMKFLTARTLSA) constitute a propeptide that is removed on maturation. 3 cysteine pairs are disulfide-bonded: cysteine 49–cysteine 65, cysteine 56–cysteine 70, and cysteine 64–cysteine 74.

This sequence belongs to the conotoxin O2 superfamily. Expressed by the venom duct.

The protein resides in the secreted. In Conus ventricosus (Mediterranean cone), this protein is Conotoxin VnMEKL-012.